The following is a 370-amino-acid chain: Queuine tRNA-ribosyltransferase (370 aa).

The Proton acceptor role is filled by Asp-89. Residues 89–93 (DSGGF), Asp-143, Gln-187, and Gly-214 contribute to the substrate site. Residues 245-251 (GVGKPEN) are RNA binding. Residue Asp-264 is the Nucleophile of the active site. The segment at 269–273 (TRNAR) is RNA binding; important for wobble base 34 recognition. Cys-302, Cys-304, Cys-307, and His-333 together coordinate Zn(2+).

Belongs to the queuine tRNA-ribosyltransferase family. Homodimer. Within each dimer, one monomer is responsible for RNA recognition and catalysis, while the other monomer binds to the replacement base PreQ1. Zn(2+) serves as cofactor.

The catalysed reaction is 7-aminomethyl-7-carbaguanine + guanosine(34) in tRNA = 7-aminomethyl-7-carbaguanosine(34) in tRNA + guanine. Its pathway is tRNA modification; tRNA-queuosine biosynthesis. Functionally, catalyzes the base-exchange of a guanine (G) residue with the queuine precursor 7-aminomethyl-7-deazaguanine (PreQ1) at position 34 (anticodon wobble position) in tRNAs with GU(N) anticodons (tRNA-Asp, -Asn, -His and -Tyr). Catalysis occurs through a double-displacement mechanism. The nucleophile active site attacks the C1' of nucleotide 34 to detach the guanine base from the RNA, forming a covalent enzyme-RNA intermediate. The proton acceptor active site deprotonates the incoming PreQ1, allowing a nucleophilic attack on the C1' of the ribose to form the product. After dissociation, two additional enzymatic reactions on the tRNA convert PreQ1 to queuine (Q), resulting in the hypermodified nucleoside queuosine (7-(((4,5-cis-dihydroxy-2-cyclopenten-1-yl)amino)methyl)-7-deazaguanosine). This is Queuine tRNA-ribosyltransferase from Hamiltonella defensa subsp. Acyrthosiphon pisum (strain 5AT).